Consider the following 282-residue polypeptide: Phosphatidylserine decarboxylase proenzyme (282 aa).

Active-site charge relay system; for autoendoproteolytic cleavage activity residues include Asp88, His144, and Ser247. Ser247 functions as the Schiff-base intermediate with substrate; via pyruvic acid; for decarboxylase activity in the catalytic mechanism. Ser247 carries the post-translational modification Pyruvic acid (Ser); by autocatalysis.

It belongs to the phosphatidylserine decarboxylase family. PSD-B subfamily. Prokaryotic type I sub-subfamily. As to quaternary structure, heterodimer of a large membrane-associated beta subunit and a small pyruvoyl-containing alpha subunit. The cofactor is pyruvate. Post-translationally, is synthesized initially as an inactive proenzyme. Formation of the active enzyme involves a self-maturation process in which the active site pyruvoyl group is generated from an internal serine residue via an autocatalytic post-translational modification. Two non-identical subunits are generated from the proenzyme in this reaction, and the pyruvate is formed at the N-terminus of the alpha chain, which is derived from the carboxyl end of the proenzyme. The autoendoproteolytic cleavage occurs by a canonical serine protease mechanism, in which the side chain hydroxyl group of the serine supplies its oxygen atom to form the C-terminus of the beta chain, while the remainder of the serine residue undergoes an oxidative deamination to produce ammonia and the pyruvoyl prosthetic group on the alpha chain. During this reaction, the Ser that is part of the protease active site of the proenzyme becomes the pyruvoyl prosthetic group, which constitutes an essential element of the active site of the mature decarboxylase.

Its subcellular location is the cell membrane. It carries out the reaction a 1,2-diacyl-sn-glycero-3-phospho-L-serine + H(+) = a 1,2-diacyl-sn-glycero-3-phosphoethanolamine + CO2. It functions in the pathway phospholipid metabolism; phosphatidylethanolamine biosynthesis; phosphatidylethanolamine from CDP-diacylglycerol: step 2/2. Functionally, catalyzes the formation of phosphatidylethanolamine (PtdEtn) from phosphatidylserine (PtdSer). In Xanthomonas oryzae pv. oryzae (strain MAFF 311018), this protein is Phosphatidylserine decarboxylase proenzyme.